The sequence spans 925 residues: Isoleucine--tRNA ligase (925 aa).

A 'HIGH' region motif is present at residues 57-67 (PYANGDIHMGH). Position 556 (E556) interacts with L-isoleucyl-5'-AMP. A 'KMSKS' region motif is present at residues 597–601 (KMSKS). K600 is an ATP binding site. 4 residues coordinate Zn(2+): C890, C893, C910, and C913.

This sequence belongs to the class-I aminoacyl-tRNA synthetase family. IleS type 1 subfamily. Monomer. Zn(2+) serves as cofactor.

The protein localises to the cytoplasm. It carries out the reaction tRNA(Ile) + L-isoleucine + ATP = L-isoleucyl-tRNA(Ile) + AMP + diphosphate. Its function is as follows. Catalyzes the attachment of isoleucine to tRNA(Ile). As IleRS can inadvertently accommodate and process structurally similar amino acids such as valine, to avoid such errors it has two additional distinct tRNA(Ile)-dependent editing activities. One activity is designated as 'pretransfer' editing and involves the hydrolysis of activated Val-AMP. The other activity is designated 'posttransfer' editing and involves deacylation of mischarged Val-tRNA(Ile). This Carboxydothermus hydrogenoformans (strain ATCC BAA-161 / DSM 6008 / Z-2901) protein is Isoleucine--tRNA ligase.